Here is a 430-residue protein sequence, read N- to C-terminus: ATP-dependent RNA helicase RhlB (430 aa).

The short motif at 9–37 (QKFSDFALHPQVIEALESKGFHYCTPIQA) is the Q motif element. Residues 40 to 219 (LPLTLSGRDV…FEQMNNAEYV (180 aa)) enclose the Helicase ATP-binding domain. Position 53–60 (53–60 (AQTGTGKT)) interacts with ATP. Residues 165-168 (DEAD) carry the DEAD box motif. Residues 245 to 390 (RLLQTLLEEE…LSKYNSDALM (146 aa)) enclose the Helicase C-terminal domain. The segment at 392–430 (DLPAPKRLTRPPRSNNGPRRHNSAPRRSGAPRNNRKRAD) is disordered.

Belongs to the DEAD box helicase family. RhlB subfamily. Component of the RNA degradosome, which is a multiprotein complex involved in RNA processing and mRNA degradation.

Its subcellular location is the cytoplasm. The catalysed reaction is ATP + H2O = ADP + phosphate + H(+). In terms of biological role, DEAD-box RNA helicase involved in RNA degradation. Has RNA-dependent ATPase activity and unwinds double-stranded RNA. The polypeptide is ATP-dependent RNA helicase RhlB (Pectobacterium atrosepticum (strain SCRI 1043 / ATCC BAA-672) (Erwinia carotovora subsp. atroseptica)).